A 606-amino-acid polypeptide reads, in one-letter code: (R)-limonene synthase 1, chloroplastic (606 aa).

The N-terminal 32 residues, 1-32 (MSSCINPSTLVTSVNAFKCLPLATNKAAIRIM), are a transit peptide targeting the chloroplast. Mn(2+) contacts are provided by Asp342 and Asp346. Residues Asp342, Asp346, Arg484, Asp487, and Lys503 each contribute to the substrate site. A DDXXD motif motif is present at residues 342–346 (DDIYD). A Mn(2+)-binding site is contributed by Asp487.

The protein belongs to the terpene synthase family. Mg(2+) is required as a cofactor. The cofactor is Mn(2+).

The protein resides in the plastid. The protein localises to the chloroplast. The catalysed reaction is (2E)-geranyl diphosphate = (4R)-limonene + diphosphate. This Citrus limon (Lemon) protein is (R)-limonene synthase 1, chloroplastic.